The primary structure comprises 567 residues: 2-succinyl-5-enolpyruvyl-6-hydroxy-3-cyclohexene-1-carboxylate synthase (567 aa).

Belongs to the TPP enzyme family. MenD subfamily. As to quaternary structure, homodimer. Requires Mg(2+) as cofactor. Mn(2+) is required as a cofactor. Thiamine diphosphate serves as cofactor.

It carries out the reaction isochorismate + 2-oxoglutarate + H(+) = 5-enolpyruvoyl-6-hydroxy-2-succinyl-cyclohex-3-ene-1-carboxylate + CO2. Its pathway is quinol/quinone metabolism; 1,4-dihydroxy-2-naphthoate biosynthesis; 1,4-dihydroxy-2-naphthoate from chorismate: step 2/7. The protein operates within quinol/quinone metabolism; menaquinone biosynthesis. Functionally, catalyzes the thiamine diphosphate-dependent decarboxylation of 2-oxoglutarate and the subsequent addition of the resulting succinic semialdehyde-thiamine pyrophosphate anion to isochorismate to yield 2-succinyl-5-enolpyruvyl-6-hydroxy-3-cyclohexene-1-carboxylate (SEPHCHC). The polypeptide is 2-succinyl-5-enolpyruvyl-6-hydroxy-3-cyclohexene-1-carboxylate synthase (Yersinia pseudotuberculosis serotype I (strain IP32953)).